The following is a 342-amino-acid chain: L-lysine 2,3-aminomutase (342 aa).

One can recognise a Radical SAM core domain in the interval 106–329; the sequence is HKYQNRALLL…PRLAREIGGE (224 aa). Cys120, Cys124, and Cys127 together coordinate [4Fe-4S] cluster. At Lys332 the chain carries N6-(pyridoxal phosphate)lysine.

This sequence belongs to the radical SAM superfamily. KamA family. [4Fe-4S] cluster is required as a cofactor. Pyridoxal 5'-phosphate serves as cofactor.

It carries out the reaction L-lysine = D-beta-lysine. Functionally, with EpmA is involved in the beta-lysylation step of the post-translational modification of translation elongation factor P (EF-P) on 'Lys-34'. EpmB appears to act before EpmA. Displays lysine 2,3-aminomutase activity, producing (R)-beta-lysine from (S)-alpha-lysine (L-lysine). This chain is L-lysine 2,3-aminomutase (epmB), found in Salmonella typhimurium (strain LT2 / SGSC1412 / ATCC 700720).